The primary structure comprises 501 residues: Armadillo repeat-containing protein 6 (501 aa).

Position 64 is a phosphoserine (S64). ARM repeat units follow at residues 220 to 264, 274 to 318, 319 to 369, and 370 to 412; these read GVLP…HAHN, KGLK…DLGG, LSIL…RAGG, and TESI…VEGG. Pros-methylhistidine is present on H263.

The protein belongs to the ARMC6 family. Methylated at His-263 by METTL9.

This is Armadillo repeat-containing protein 6 (ARMC6) from Pongo abelii (Sumatran orangutan).